The following is a 183-amino-acid chain: Ankyrin repeat domain-containing protein 39 (183 aa).

4 ANK repeats span residues 30–59 (DFERGIWSAALNGDLGRVKHLIQKAEDPSQ), 63–92 (AGYTALHYASRNGHYAVCQFLLESGAKCDA), 96–125 (GGATALHRASYCGHTEIARLLLSHGSNPRV), and 129–158 (DGMTSLHKAAERGHGDICSLLLQHSPALKA). Ser153 carries the post-translational modification Phosphoserine.

The protein belongs to the ANKRD39 family.

The chain is Ankyrin repeat domain-containing protein 39 (ANKRD39) from Homo sapiens (Human).